The sequence spans 1255 residues: Period circadian protein homolog 2 (1255 aa).

The disordered stretch occupies residues 1-79; sequence MNGYAEFPPS…EPPDARQSPD (79 aa). The segment covering 35–56 has biased composition (polar residues); it reads SSGSSGHETNENCSTGRDSQGS. The Nuclear export signal 1 motif lies at 111–120; sequence LIKTLKELKV. Residues 181-248 enclose the PAS 1 domain; sequence VTSEHIVKNA…FHSFTSPYKL (68 aa). The LXXLL signature appears at 308 to 312; it reads LCCLL. Positions 321–387 constitute a PAS 2 domain; it reads YEAPRIPPEK…MLAIHKKILQ (67 aa). The PAC domain occupies 395–438; the sequence is YSPIRFRARNGEYITLDTSWSSFINPWSRKISFIIGRHKVRVGP. Residues 462–471 carry the Nuclear export signal 2 motif; that stretch reads LTEQIHRLLL. 2 disordered regions span residues 473–557 and 617–646; these read PVPH…AVPA and RSSDKRKATVSPGPHAGEAEPPSRVNSRTG. The interval 480–484 is important for protein stability; the sequence is SGYGS. The segment covering 504 to 516 has biased composition (basic and acidic residues); the sequence is NGHEDSRRRRAEI. A CSNK1E binding domain region spans residues 512–717; the sequence is RRAEICKNGN…ALACGLSQEK (206 aa). 4 positions are modified to phosphoserine: serine 527, serine 530, serine 533, and serine 540. Positions 529-541 are enriched in basic and acidic residues; the sequence is YSHESGEQKKKSV. A phosphoserine mark is found at serine 662, serine 696, serine 700, serine 714, serine 766, and serine 771. Disordered regions lie at residues 764–838 and 931–985; these read ERSK…DTSQ and FPSH…QSRS. A Nuclear localization signal motif is present at residues 789 to 805; sequence KKTGKNRKLKSKRVKPR. Positions 790 to 803 are enriched in basic residues; that stretch reads KTGKNRKLKSKRVK. Composition is skewed to polar residues over residues 829 to 838 and 936 to 956; these read TAWSPSDTSQ and TLTSEMASASQPEFPSRTSIP. An interaction with PPARG region spans residues 888–1071; sequence QFAVQPPPFP…NEDLCSASGS (184 aa). Serine 945 carries the phosphoserine modification. Positions 959–972 are enriched in low complexity; that stretch reads PCACPATRATPPSA. At serine 977 the chain carries Phosphoserine. Positions 989–996 match the Nuclear export signal 3 motif; the sequence is LQLNLLQL. The segment at 1018–1050 is disordered; it reads VGADCKPGTSRDQQPKAPLTRDEPSDTQNSDAL. The short motif at 1057–1061 is the LXXLL element; the sequence is LNLLL. A disordered region spans residues 1077–1106; that stretch reads LGSGSLGCDASPSGAGSSDTSHTSKYFGSI. Residues 1090-1106 show a composition bias toward polar residues; sequence GAGSSDTSHTSKYFGSI. The residue at position 1124 (serine 1124) is a Phosphoserine. A CRY binding domain region spans residues 1155–1255; it reads SRNLEAVLKE…PLNHRIEEQT (101 aa). Residues 1231-1255 form a disordered region; it reads GLSEVSDTKEDENGSPLNHRIEEQT.

As to quaternary structure, homodimer. Component of the circadian core oscillator, which includes the CRY proteins, CLOCK or NPAS2, BMAL1 or BMAL2, CSNK1D and/or CSNK1E, TIMELESS, and the PER proteins. Interacts with CLOCK-BMAL1 (off DNA). Interacts with BMAL2. Interacts directly with PER1 and PER3, and through a C-terminal domain, with CRY1 and CRY2. Interacts (via PAS 2 domain) with TIMELESS. Interacts with NFIL3. Different large complexes have been identified with different repressive functions. The core of PER complexes is composed of at least PER1, PER2, PER3, CRY1, CRY2, CSNK1D and/or CSNK1E. The large PER complex involved in the repression of transcriptional termination is composed of at least PER2, CDK9, DDX5, DHX9, NCBP1 and POLR2A (active). The large PER complex involved in the histone deacetylation is composed of at least HDAC1, PER2, SFPQ and SIN3A. The large PER complex involved in the histone methylation is composed of at least PER2, CBX3, TRIM28, SUV39H1 and/or SUV39H2; CBX3 mediates the formation of the complex. Interacts with SETX; the interaction inhibits termination of circadian target genes. Interacts with the nuclear receptors HNF4A, NR1D1, NR4A2, RORA, PPARA, PPARG and THRA; the interaction with at least PPARG is ligand dependent. Interacts with PML. Interacts (phosphorylated) with BTRC and FBXW11; the interactions trigger proteasomal degradation. Interacts with NONO and SFPQ. Interacts with CAVIN3. Interacts with MAGEL2. Interacts with MAP1LC3B. Interacts with HNF4A. In terms of processing, acetylated. Deacetylated by SIRT1, resulting in decreased protein stability. Deacetylated by SIRT6, preventing its degradation by the proteasome, resulting in increased protein stability. Phosphorylated by CSNK1E and CSNK1D. Phosphorylation results in PER2 protein degradation. May be dephosphorylated by PP1. Post-translationally, ubiquitinated, leading to its proteasomal degradation. Ubiquitination may be inhibited by CRY1. In terms of tissue distribution, widely expressed. Found in heart, brain, placenta, lung, liver, skeleatal muscle, kidney and pancreas. High levels in skeletal muscle and pancreas. Low levels in lung. Isoform 2 is expressed in keratinocytes (at protein level).

The protein localises to the nucleus. It is found in the cytoplasm. The protein resides in the perinuclear region. It localises to the nucleolus. Transcriptional repressor which forms a core component of the circadian clock. The circadian clock, an internal time-keeping system, regulates various physiological processes through the generation of approximately 24 hour circadian rhythms in gene expression, which are translated into rhythms in metabolism and behavior. It is derived from the Latin roots 'circa' (about) and 'diem' (day) and acts as an important regulator of a wide array of physiological functions including metabolism, sleep, body temperature, blood pressure, endocrine, immune, cardiovascular, and renal function. Consists of two major components: the central clock, residing in the suprachiasmatic nucleus (SCN) of the brain, and the peripheral clocks that are present in nearly every tissue and organ system. Both the central and peripheral clocks can be reset by environmental cues, also known as Zeitgebers (German for 'timegivers'). The predominant Zeitgeber for the central clock is light, which is sensed by retina and signals directly to the SCN. The central clock entrains the peripheral clocks through neuronal and hormonal signals, body temperature and feeding-related cues, aligning all clocks with the external light/dark cycle. Circadian rhythms allow an organism to achieve temporal homeostasis with its environment at the molecular level by regulating gene expression to create a peak of protein expression once every 24 hours to control when a particular physiological process is most active with respect to the solar day. Transcription and translation of core clock components (CLOCK, NPAS2, BMAL1, BMAL2, PER1, PER2, PER3, CRY1 and CRY2) plays a critical role in rhythm generation, whereas delays imposed by post-translational modifications (PTMs) are important for determining the period (tau) of the rhythms (tau refers to the period of a rhythm and is the length, in time, of one complete cycle). A diurnal rhythm is synchronized with the day/night cycle, while the ultradian and infradian rhythms have a period shorter and longer than 24 hours, respectively. Disruptions in the circadian rhythms contribute to the pathology of cardiovascular diseases, cancer, metabolic syndrome and aging. A transcription/translation feedback loop (TTFL) forms the core of the molecular circadian clock mechanism. Transcription factors, CLOCK or NPAS2 and BMAL1 or BMAL2, form the positive limb of the feedback loop, act in the form of a heterodimer and activate the transcription of core clock genes and clock-controlled genes (involved in key metabolic processes), harboring E-box elements (5'-CACGTG-3') within their promoters. The core clock genes: PER1/2/3 and CRY1/2 which are transcriptional repressors form the negative limb of the feedback loop and interact with the CLOCK|NPAS2-BMAL1|BMAL2 heterodimer inhibiting its activity and thereby negatively regulating their own expression. This heterodimer also activates nuclear receptors NR1D1/2 and RORA/B/G, which form a second feedback loop and which activate and repress BMAL1 transcription, respectively. PER1 and PER2 proteins transport CRY1 and CRY2 into the nucleus with appropriate circadian timing, but also contribute directly to repression of clock-controlled target genes through interaction with several classes of RNA-binding proteins, helicases and others transcriptional repressors. PER appears to regulate circadian control of transcription by at least three different modes. First, interacts directly with the CLOCK-BMAL1 at the tail end of the nascent transcript peak to recruit complexes containing the SIN3-HDAC that remodel chromatin to repress transcription. Second, brings H3K9 methyltransferases such as SUV39H1 and SUV39H2 to the E-box elements of the circadian target genes, like PER2 itself or PER1. The recruitment of each repressive modifier to the DNA seems to be very precisely temporally orchestrated by the large PER complex, the deacetylases acting before than the methyltransferases. Additionally, large PER complexes are also recruited to the target genes 3' termination site through interactions with RNA-binding proteins and helicases that may play a role in transcription termination to regulate transcription independently of CLOCK-BMAL1 interactions. Recruitment of large PER complexes to the elongating polymerase at PER and CRY termination sites inhibited SETX action, impeding RNA polymerase II release and thereby repressing transcriptional reinitiation. May propagate clock information to metabolic pathways via the interaction with nuclear receptors. Coactivator of PPARA and corepressor of NR1D1, binds rhythmically at the promoter of nuclear receptors target genes like BMAL1 or G6PC1. Directly and specifically represses PPARG proadipogenic activity by blocking PPARG recruitment to target promoters and thereby inhibiting transcriptional activation. Required for fatty acid and lipid metabolism, is involved as well in the regulation of circulating insulin levels. Plays an important role in the maintenance of cardiovascular functions through the regulation of NO and vasodilatatory prostaglandins production in aortas. Controls circadian glutamate uptake in synaptic vesicles through the regulation of VGLUT1 expression. May also be involved in the regulation of inflammatory processes. Represses the CLOCK-BMAL1 induced transcription of BHLHE40/DEC1 and ATF4. Negatively regulates the formation of the TIMELESS-CRY1 complex by competing with TIMELESS for binding to CRY1. In Homo sapiens (Human), this protein is Period circadian protein homolog 2 (PER2).